A 332-amino-acid chain; its full sequence is Malate dehydrogenase (332 aa).

NAD(+)-binding positions include 16 to 17 (QI), D43, and G90. R99 lines the oxaloacetate pocket. Positions 113 and 132 each coordinate NAD(+). The oxaloacetate site is built by N132, R163, H188, and S243. Residue H188 is the Proton acceptor of the active site.

The protein belongs to the LDH/MDH superfamily. MDH type 2 family. Homodimer.

It is found in the cytoplasm. It carries out the reaction (S)-malate + NAD(+) = oxaloacetate + NADH + H(+). In terms of biological role, catalyzes the reduction of the carbonyl group of oxalacetic acid. No activity with pulegone. This is Malate dehydrogenase (MD1) from Nicotiana tabacum (Common tobacco).